Reading from the N-terminus, the 456-residue chain is uncharacterized protein (456 aa).

Composition is skewed to basic and acidic residues over residues 181–210 (DQRKESIVNDERKKNPEFREKPDKNEDKKV) and 217–231 (KEIENKGIDHEENEE). The tract at residues 181–231 (DQRKESIVNDERKKNPEFREKPDKNEDKKVKPPPSLKEIENKGIDHEENEE) is disordered. A coiled-coil region spans residues 216–248 (LKEIENKGIDHEENEEDKKRELMFKLQLLQKQY). The helical transmembrane segment at 347–365 (LALAILFNAVWFIAAKMIM) threads the bilayer. Over residues 383–407 (NKSGTTPNSVSPRTWGNSKSPQSEF) the composition is skewed to polar residues. Residues 383 to 456 (NKSGTTPNSV…MREQGIETLK (74 aa)) are disordered. Over residues 441–456 (DESRREMREQGIETLK) the composition is skewed to basic and acidic residues.

The protein belongs to the IIV-6 067R family.

It localises to the membrane. This is an uncharacterized protein from Invertebrate iridescent virus 6 (IIV-6).